Consider the following 315-residue polypeptide: MTMITFLTTTQNGSYDRLATRQAVFLKQNLNVDSQIIRMAQTQLVPVKGSHVIIYTTFNIYPVLINKYRQQLEGKKCVALLDSALMTIPYRNPVFKDPICTVYTTSRFNQENFATLGVSIPYIPHFIPDPNPEGKLKSLSERQYDFITVGINEMDFDRKGHFWNFLVQRWGFKAISVCKFYCFGDHKQDLPDEELWSLYANTKWYLGTSHAETPHLPLLEAYAFGTPAVYISAHEFRYIGFGIPISPAYINVKGTKNFYFAEINTESFIQAVGKAMRMSEGDYNSLSKQARRFFENNYSLNNRVDEFRALFDDSM.

This sequence belongs to the glycosyltransferase group 1 family. Glycosyltransferase 4 subfamily.

This Acidianus convivator (ABV) protein is Putative glycosyltransferase ORF315.